We begin with the raw amino-acid sequence, 171 residues long: PBAN-type neuropeptides (171 aa).

The first 22 residues, 1–22 (MFRLYFFFNVICIFLAIRSAIG), serve as a signal peptide directing secretion. A propeptide spanning residues 23–47 (GEVPDATEQKINNFLASGKDSEDLS) is cleaved from the precursor. The residue at position 59 (Leu-59) is a Leucine amide. A propeptide spanning residues 63–111 (TIASELHDEMMDEIDDNPLYYSGESPQRVASEIAQGTPYVVLLLTGRVL) is cleaved from the precursor. The tract at residues 120–151 (HSTTPRLGRRDASSSNENNSRPPFAPRLGRNL) is disordered. Leucine amide occurs at positions 126, 147, and 157. Positions 160–171 (SFGAPVVDNFAY) are excised as a propeptide.

Belongs to the pyrokinin family.

It is found in the secreted. A hormone that controls sex pheromone production in females and pheromone responsiveness in male. Also mediates visceral muscle contractile activity (myotropic activity). This chain is PBAN-type neuropeptides, found in Aedes aegypti (Yellowfever mosquito).